Here is a 294-residue protein sequence, read N- to C-terminus: N-acetylmuramic acid 6-phosphate etherase (294 aa).

Positions 54 to 217 (VIASFRKGGR…STTSMIGVGK (164 aa)) constitute an SIS domain. Glutamate 82 functions as the Proton donor in the catalytic mechanism. Glutamate 113 is an active-site residue.

The protein belongs to the GCKR-like family. MurNAc-6-P etherase subfamily. Homodimer.

The catalysed reaction is N-acetyl-D-muramate 6-phosphate + H2O = N-acetyl-D-glucosamine 6-phosphate + (R)-lactate. It functions in the pathway amino-sugar metabolism; N-acetylmuramate degradation. In terms of biological role, specifically catalyzes the cleavage of the D-lactyl ether substituent of MurNAc 6-phosphate, producing GlcNAc 6-phosphate and D-lactate. The protein is N-acetylmuramic acid 6-phosphate etherase of Exiguobacterium sp. (strain ATCC BAA-1283 / AT1b).